An 829-amino-acid polypeptide reads, in one-letter code: pre-rRNA 2'-O-ribose RNA methyltransferase FTSJ3 (829 aa).

The S-adenosyl-L-methionine site is built by Gly-56, Trp-58, Asp-76, Asp-92, and Asp-117. Catalysis depends on Lys-157, which acts as the Proton acceptor. Positions Ile-332 to Arg-367 are disordered. Phosphoserine occurs at positions 333, 335, 336, 345, and 353. Residues Ser-336 to Ala-346 show a composition bias toward acidic residues. Acidic residues predominate over residues Glu-354–Glu-363. Arg-389 carries the post-translational modification Citrulline. Disordered stretches follow at residues Phe-443 to Val-508 and Asp-528 to Val-634. Over residues Asp-456–Glu-473 the composition is skewed to acidic residues. 2 positions are modified to phosphoserine: Ser-531 and Ser-544. A Glycyl lysine isopeptide (Lys-Gly) (interchain with G-Cter in SUMO2) cross-link involves residue Lys-570. Ser-575 is modified (phosphoserine). Residues Lys-626 and Lys-642 each participate in a glycyl lysine isopeptide (Lys-Gly) (interchain with G-Cter in SUMO2) cross-link. A Phosphoserine modification is found at Ser-659. A Glycyl lysine isopeptide (Lys-Gly) (interchain with G-Cter in SUMO2) cross-link involves residue Lys-661. The residue at position 671 (Ser-671) is a Phosphoserine. Residue Lys-693 forms a Glycyl lysine isopeptide (Lys-Gly) (interchain with G-Cter in SUMO2) linkage. Residues Ile-722–Glu-760 adopt a coiled-coil conformation. At Arg-766 the chain carries Citrulline. Over residues Val-794–Phe-804 the composition is skewed to basic residues. Residues Val-794–Lys-829 form a disordered region. The segment covering Lys-805–Lys-820 has biased composition (basic and acidic residues).

Belongs to the class I-like SAM-binding methyltransferase superfamily. RNA methyltransferase RlmE family. SPB1 subfamily. In terms of assembly, interacts with NIP7. In terms of processing, citrullinated by PADI4.

It is found in the nucleus. The protein resides in the nucleolus. It catalyses the reaction a ribonucleotide in rRNA + S-adenosyl-L-methionine = a 2'-O-methylribonucleotide in rRNA + S-adenosyl-L-homocysteine + H(+). RNA 2'-O-methyltransferase involved in the processing of the 34S pre-rRNA to 18S rRNA and in 40S ribosomal subunit formation. This Rattus norvegicus (Rat) protein is pre-rRNA 2'-O-ribose RNA methyltransferase FTSJ3 (Ftsj3).